Consider the following 384-residue polypeptide: Dual-specificity RNA methyltransferase RlmN (384 aa).

The Proton acceptor role is filled by Glu-93. The Radical SAM core domain maps to 99–339 (EETRGTLCVS…TTIRKTRGDD (241 aa)). A disulfide bridge links Cys-106 with Cys-344. Positions 113, 117, and 120 each coordinate [4Fe-4S] cluster. S-adenosyl-L-methionine contacts are provided by residues 170 to 171 (GE), Ser-202, 224 to 226 (SLH), and Asn-301. Cys-344 (S-methylcysteine intermediate) is an active-site residue.

Belongs to the radical SAM superfamily. RlmN family. It depends on [4Fe-4S] cluster as a cofactor.

It is found in the cytoplasm. It catalyses the reaction adenosine(2503) in 23S rRNA + 2 reduced [2Fe-2S]-[ferredoxin] + 2 S-adenosyl-L-methionine = 2-methyladenosine(2503) in 23S rRNA + 5'-deoxyadenosine + L-methionine + 2 oxidized [2Fe-2S]-[ferredoxin] + S-adenosyl-L-homocysteine. It carries out the reaction adenosine(37) in tRNA + 2 reduced [2Fe-2S]-[ferredoxin] + 2 S-adenosyl-L-methionine = 2-methyladenosine(37) in tRNA + 5'-deoxyadenosine + L-methionine + 2 oxidized [2Fe-2S]-[ferredoxin] + S-adenosyl-L-homocysteine. Functionally, specifically methylates position 2 of adenine 2503 in 23S rRNA and position 2 of adenine 37 in tRNAs. m2A2503 modification seems to play a crucial role in the proofreading step occurring at the peptidyl transferase center and thus would serve to optimize ribosomal fidelity. The chain is Dual-specificity RNA methyltransferase RlmN from Cupriavidus necator (strain ATCC 17699 / DSM 428 / KCTC 22496 / NCIMB 10442 / H16 / Stanier 337) (Ralstonia eutropha).